Here is a 637-residue protein sequence, read N- to C-terminus: Anthranilate synthase, phenazine specific (637 aa).

Residues 1-434 (MSQAAARLME…QRQQTQSDFS (434 aa)) form an anthranilate synthase component I region. The 192-residue stretch at 437–628 (QVLIVDAEDT…LRHALIHTPV (192 aa)) folds into the Glutamine amidotransferase type-1 domain. Residues C517, H602, and E604 each act as for GATase activity in the active site.

The enzyme catalyses chorismate + L-glutamine = anthranilate + pyruvate + L-glutamate + H(+). Its pathway is antibiotic biosynthesis; phenazine biosynthesis. Its function is as follows. Involved in the biosynthesis of the antibiotic, phenazine, a nitrogen-containing heterocyclic molecule having important roles in virulence, competition and biological control. This is Anthranilate synthase, phenazine specific (phzE) from Pseudomonas fluorescens.